Consider the following 826-residue polypeptide: Lysine-specific histone demethylase 1B (826 aa).

A compositionally biased stretch (basic residues) spans 1 to 11; it reads MAASRGRSKKR. The disordered stretch occupies residues 1–46; it reads MAASRGRSKKRSNLELSPDNLPLRSSGRQAKKKAVEIPDEDEDGSS. Phosphoserine is present on residues serine 17 and serine 26. Zn(2+)-binding residues include cysteine 53, cysteine 58, cysteine 65, cysteine 73, histidine 84, histidine 90, cysteine 92, cysteine 95, cysteine 142, cysteine 147, cysteine 169, and cysteine 185. The CW-type zinc finger occupies 133–193; it reads DQQLPYWVQC…HCSFPEDLRV (61 aa). Residue serine 253 is modified to Phosphoserine. The segment at 279 to 298 is GLYR1-binding; sequence YQPNECGKALCVRPDVMELD. The SWIRM domain maps to 281–379; sequence PNECGKALCV…TGVLTVAAGQ (99 aa). FAD is bound at residue 389 to 445; it reads KSVLVVGAGPAGLAAARQLHNFGMKVTVLEAKDRIGGRVWDDKSFKGVVVGRGPQIV. Histone H3-binding regions lie at residues 444–473, 493–504, and 544–578; these read IVNG…RCDL, FNALLDVVSEWR, and FHLS…AGDH. The tract at residues 570 to 572 is GLYR1-binding; the sequence is FFA. FAD contacts are provided by residues valine 604, glutamate 799, and 807-809; that span reads QTV. The interval 802-818 is GLYR1-binding; the sequence is NRHFPQTVTGAYLSGVR.

This sequence belongs to the flavin monoamine oxidase family. In terms of assembly, interacts with its cofactor GLYR1 at nucleosomes; this interaction stimulates H3K4me1 and H3K4me2 demethylation. In contrast to KDM1A, does not form a complex with RCOR1/CoREST. Possible accessory component of the polycomb repressive deubiquitinase (PR-DUB) complex, at least composed of BAP1, one of ASXL1, ASXL2 or (probably) ASXL3 and one of MBD5 or MBD6. The PR-DUB core associates with a number of accessory proteins, including FOXK1, FOXK2, KDM1B, HCFC1 and OGT; KDM1B specifically associates with ASXL2 PR-DUB complexes. Requires FAD as cofactor. Zn(2+) is required as a cofactor. In terms of tissue distribution, expressed in growing oocytes and in intestinal gland.

The protein resides in the nucleus. The protein localises to the chromosome. The catalysed reaction is N(6),N(6)-dimethyl-L-lysyl(4)-[histone H3] + 2 A + 2 H2O = L-lysyl(4)-[histone H3] + 2 formaldehyde + 2 AH2. The enzyme catalyses N(6)-methyl-L-lysyl(4)-[histone H3] + A + H2O = L-lysyl(4)-[histone H3] + formaldehyde + AH2. Inhibited by tranylcypromine, but not by pargyline, deprenyl or rasagiline. Histone H3K4me1 and H3K4me2 demethylase activity is inhibited by DNA, this inhibition is released in complex with GLYR1. Its function is as follows. Histone demethylase that demethylates 'Lys-4' of histone H3, a specific tag for epigenetic transcriptional activation, thereby acting as a corepressor. Required for de novo DNA methylation of a subset of imprinted genes during oogenesis. Acts by oxidizing the substrate by FAD to generate the corresponding imine that is subsequently hydrolyzed. Demethylates both mono- and di-methylated 'Lys-4' of histone H3. Has no effect on tri-methylated 'Lys-4', mono-, di- or tri-methylated 'Lys-9', mono-, di- or tri-methylated 'Lys-27', mono-, di- or tri-methylated 'Lys-36' of histone H3, or on mono-, di- or tri-methylated 'Lys-20' of histone H4. Functionally, histone demethylase that demethylates 'Lys-4' of histone H3, a specific tag for epigenetic transcriptional activation, thereby acting as a corepressor. Required for de novo DNA methylation of a subset of imprinted genes during oogenesis. Acts by oxidizing the substrate by FAD to generate the corresponding imine that is subsequently hydrolyzed. Demethylates both mono- and di-methylated 'Lys-4' of histone H3. Has no effect on tri-methylated 'Lys-4', mono-, di- or tri-methylated 'Lys-9', mono-, di- or tri-methylated 'Lys-27', mono-, di- or tri-methylated 'Lys-36' of histone H3, or on mono-, di- or tri-methylated 'Lys-20' of histone H4. Alone, it is unable to demethylate H3K4me on nucleosomes and requires the presence of GLYR1 to achieve such activity, they form a multifunctional enzyme complex that modifies transcribed chromatin and facilitates Pol II transcription through nucleosomes. The protein is Lysine-specific histone demethylase 1B of Mus musculus (Mouse).